Reading from the N-terminus, the 427-residue chain is MTWFIDRRLNGKNKSMVNRQRFLRRYKAQIKQSISEAINKRSVTDVDSGESVSIPTEDISEPMFHQGRGGLRHRVHPGNDHFVQSDRIERPQGGGGGSGSGQGQASQDGEGQDEFVFQISKDEYLDLLFEDLALPNLKRNQQRQLTEYKTHRAGYTANGVPANISVVRSLQNSLARRTAMTAGKRRELHALEETLQIISNSEPAQLLEEERLRKEIAELREKISRVPFIDTFDLRYKNYEKRPDPSSQAVMFCLMDVSGSMDQSTKDMAKRFYILLYLFLSRTYKNVEVVYIRHHTQAKEVDEHEFFYSQETGGTIVSSALKLMDEVVQARYDPAQWNIYAAQASDGDNWADDSPLCHEILAKKLLPVVRYYSYIEITRRAHQTLWREYEHLQSTFENFAMQHIRDQDDIYPVFRELFHKQNATVKD.

A disordered region spans residues Gln-84–Glu-110. Gly residues predominate over residues Gln-92–Gln-102.

The protein belongs to the UPF0229 family.

This is UPF0229 protein YeaH from Escherichia fergusonii (strain ATCC 35469 / DSM 13698 / CCUG 18766 / IAM 14443 / JCM 21226 / LMG 7866 / NBRC 102419 / NCTC 12128 / CDC 0568-73).